The following is a 130-amino-acid chain: Small ribosomal subunit protein uS9 (130 aa).

The tract at residues 105-130 (TRDARMKERKKPGLKKARKASQFSKR) is disordered. Over residues 111-130 (KERKKPGLKKARKASQFSKR) the composition is skewed to basic residues.

This sequence belongs to the universal ribosomal protein uS9 family.

The sequence is that of Small ribosomal subunit protein uS9 from Lactiplantibacillus plantarum (strain ATCC BAA-793 / NCIMB 8826 / WCFS1) (Lactobacillus plantarum).